A 125-amino-acid polypeptide reads, in one-letter code: Ino eighty subunit 5 (125 aa).

Thr-124 carries the post-translational modification Phosphothreonine.

Component of the chromatin-remodeling INO80 complex, at least composed of ARP4, ARP5, ARP8, RVB1, RVB2, TAF14, NHP10, IES1, IES3, IES4, IES6, ACT1, IES2, IES5 and INO80.

The protein resides in the nucleus. The chain is Ino eighty subunit 5 (IES5) from Saccharomyces cerevisiae (strain ATCC 204508 / S288c) (Baker's yeast).